Reading from the N-terminus, the 511-residue chain is Maturase K (511 aa).

This sequence belongs to the intron maturase 2 family. MatK subfamily.

It localises to the plastid. The protein resides in the chloroplast. Usually encoded in the trnK tRNA gene intron. Probably assists in splicing its own and other chloroplast group II introns. This chain is Maturase K, found in Poa pratensis (Kentucky bluegrass).